A 73-amino-acid polypeptide reads, in one-letter code: MKTLNFCLFLVIISSLTVRVFCLNDRFLTVNDNYVICLYINKSFVNCENLCKAYMNAKDGFCRQPHCFCTDVE.

Residues 1–22 form the signal peptide; it reads MKTLNFCLFLVIISSLTVRVFC. An LCN-type CS-alpha/beta domain is found at 24–73; it reads NDRFLTVNDNYVICLYINKSFVNCENLCKAYMNAKDGFCRQPHCFCTDVE. 3 disulfides stabilise this stretch: Cys-37-Cys-62, Cys-47-Cys-67, and Cys-51-Cys-69.

It belongs to the long (3 C-C) scorpion toxin superfamily. Sodium channel inhibitor family. Expressed by the venom gland.

The protein resides in the secreted. Functionally, putative sodium channel toxin. The protein is Putative sodium channel toxin Ts39 of Tityus serrulatus (Brazilian scorpion).